The primary structure comprises 522 residues: Glucans biosynthesis protein G (522 aa).

An N-terminal signal peptide occupies residues 1–33; that stretch reads MLVNILSKKPRAASVRWLGATVLFTLLTSPAWA.

This sequence belongs to the OpgD/OpgG family.

It localises to the periplasm. It functions in the pathway glycan metabolism; osmoregulated periplasmic glucan (OPG) biosynthesis. Functionally, involved in the biosynthesis of osmoregulated periplasmic glucans (OPGs). This chain is Glucans biosynthesis protein G, found in Serratia proteamaculans (strain 568).